Here is a 1482-residue protein sequence, read N- to C-terminus: Pregnancy zone protein (1482 aa).

Residues 1–25 form the signal peptide; the sequence is MRKDRLLHLCLVLLLILLSASDSNS. Asparagine 54, asparagine 69, asparagine 246, asparagine 392, and asparagine 406 each carry an N-linked (GlcNAc...) asparagine glycan. Residues 685–735 are bait region; the sequence is CSVIPSVSAGAVGQGYYGAGLGVVERPYVPQLGTYNVIPLNNEQSSGPVPE. Residues asparagine 753, asparagine 875, and asparagine 932 are each glycosylated (N-linked (GlcNAc...) asparagine). A cross-link (isoglutamyl cysteine thioester (Cys-Gln)) is located at residues 978-981; the sequence is CGEQ. Asparagine 997 and asparagine 1430 each carry an N-linked (GlcNAc...) asparagine glycan.

The protein belongs to the protease inhibitor I39 (alpha-2-macroglobulin) family. Homotetramer, which consists of two pairs of disulfide-linked chains. In terms of tissue distribution, plasma. Prominent constituent of late-pregnancy sera.

The protein resides in the secreted. Is able to inhibit all four classes of proteinases by a unique 'trapping' mechanism. This protein has a peptide stretch, called the 'bait region' which contains specific cleavage sites for different proteinases. When a proteinase cleaves the bait region, a conformational change is induced in the protein which traps the proteinase. The entrapped enzyme remains active against low molecular weight substrates (activity against high molecular weight substrates is greatly reduced). Following cleavage in the bait region a thioester bond is hydrolyzed and mediates the covalent binding of the protein to the proteinase. This is Pregnancy zone protein (PZP) from Homo sapiens (Human).